We begin with the raw amino-acid sequence, 142 residues long: Nucleoside diphosphate kinase (142 aa).

ATP is bound by residues K9, F57, R85, T91, R102, and N112. H115 (pros-phosphohistidine intermediate) is an active-site residue.

The protein belongs to the NDK family. In terms of assembly, homotetramer. Mg(2+) serves as cofactor.

The protein resides in the cytoplasm. It carries out the reaction a 2'-deoxyribonucleoside 5'-diphosphate + ATP = a 2'-deoxyribonucleoside 5'-triphosphate + ADP. The enzyme catalyses a ribonucleoside 5'-diphosphate + ATP = a ribonucleoside 5'-triphosphate + ADP. Major role in the synthesis of nucleoside triphosphates other than ATP. The ATP gamma phosphate is transferred to the NDP beta phosphate via a ping-pong mechanism, using a phosphorylated active-site intermediate. In Dehalococcoides mccartyi (strain CBDB1), this protein is Nucleoside diphosphate kinase.